The sequence spans 381 residues: Dynactin subunit 2 (381 aa).

Positions 15–39 are disordered; sequence DQPDVYETPDAPESETSDFYDEEPA. Over residues 24–39 the composition is skewed to acidic residues; the sequence is DAPESETSDFYDEEPA. Coiled-coil stretches lie at residues 100–216 and 350–381; these read QKCL…AVGA and GVQE…EKVK.

Belongs to the dynactin subunit 2 family. As to quaternary structure, subunit of dynactin, a multiprotein complex associated with dynein.

It is found in the cytoplasm. Its subcellular location is the cytoskeleton. It localises to the membrane. In terms of biological role, modulates cytoplasmic dynein binding to an organelle, and plays a role in prometaphase chromosome alignment and spindle organization during mitosis. The chain is Dynactin subunit 2 from Aedes aegypti (Yellowfever mosquito).